The primary structure comprises 158 residues: Glycosyl-phosphatidylinositol-anchored molecule-like protein (158 aa).

Positions 1–17 (MLLFALLLAMELPLVAA) are cleaved as a signal peptide. In terms of domain architecture, UPAR/Ly6 spans 29–134 (LRCHDCAVIN…DEVTEEELPE (106 aa)). Intrachain disulfides connect Cys-31–Cys-55, Cys-34–Cys-42, Cys-48–Cys-73, Cys-77–Cys-104, and Cys-105–Cys-110.

The protein resides in the cell membrane. In terms of biological role, may play a role in the apoptotic pathway or cell-cycle regulation induced by p53/TP53 after DNA damage. The polypeptide is Glycosyl-phosphatidylinositol-anchored molecule-like protein (GML) (Homo sapiens (Human)).